The sequence spans 610 residues: MWTFPVDYDVIVIGAGHAGCEAAYCAAKMGASVLLLTSNLDTIAKLSCNPAVGGIGKGHIVREIDALGGIMAEITDLSGIQFRILNQTKGPAVRAPRAQVDKQLYHIHMKRLLEQVPGLHIMQGTAEALLDNGEKVLGVSTKEGWAYLGKTVVLSSGTFMRGLIHIGTQNFSGGRLGDAASLGLSEDLKRLGFPLGRLKTGTPARLLASSIDFSVMEEQPGDHNVCFVHRNEMFVPTLPQVSCHITHTTDQTKDLITKNLHRSALYGGRIEGVGPRYCPSIEDKIVKFADKDRHHIFIEPEGLNTQEVYVNGLSTSMPFDVQYDIIRSVSGLENAIITRPAYAIEYDYVHGNVIFPSLESKLIEGLFLCGQINGTTGYEEAAAQGLIAGVNAVNKVLRHPPFVPSRQESYIGVMLDDLTTQVLDEPYRMFTSRAEHRLLLRQDNAGMRLSHYGHSLGLLSSERYAMFQEQKACIEQEKERLSKTFRKYGDTVVPLTKVLCRPEVSYQQLLTEFPADVRDLGPVVGASLEMEIKYSGYISRQQTLIRSMERSENISIPEDIDYHSISALSLEAREKLSKFTPRTIGSAARISGISVADIQVLMVSLKKDAH.

FAD is bound at residue 14–19 (GAGHAG). An NAD(+)-binding site is contributed by 274-288 (GPRYCPSIEDKIVKF).

It belongs to the MnmG family. In terms of assembly, homodimer. Heterotetramer of two MnmE and two MnmG subunits. FAD is required as a cofactor.

Its subcellular location is the cytoplasm. In terms of biological role, NAD-binding protein involved in the addition of a carboxymethylaminomethyl (cmnm) group at the wobble position (U34) of certain tRNAs, forming tRNA-cmnm(5)s(2)U34. The chain is tRNA uridine 5-carboxymethylaminomethyl modification enzyme MnmG from Chlamydia trachomatis serovar D (strain ATCC VR-885 / DSM 19411 / UW-3/Cx).